A 283-amino-acid polypeptide reads, in one-letter code: uncharacterized protein (283 aa).

Aspartate 121 is a catalytic residue.

This sequence belongs to the pseudouridine synthase RluA family.

The enzyme catalyses a uridine in RNA = a pseudouridine in RNA. This is an uncharacterized protein from Bacillus subtilis (strain 168).